The following is a 122-amino-acid chain: Large ribosomal subunit protein uL14 (122 aa).

It belongs to the universal ribosomal protein uL14 family. As to quaternary structure, part of the 50S ribosomal subunit. Forms a cluster with proteins L3 and L19. In the 70S ribosome, L14 and L19 interact and together make contacts with the 16S rRNA in bridges B5 and B8.

Its function is as follows. Binds to 23S rRNA. Forms part of two intersubunit bridges in the 70S ribosome. In Acidovorax sp. (strain JS42), this protein is Large ribosomal subunit protein uL14.